The sequence spans 192 residues: Elongation factor P (192 aa).

Residues 133–157 (EVTETTPGVKGDTAQGGDKPATLES) form a disordered region.

Belongs to the elongation factor P family.

It localises to the cytoplasm. Its pathway is protein biosynthesis; polypeptide chain elongation. Involved in peptide bond synthesis. Stimulates efficient translation and peptide-bond synthesis on native or reconstituted 70S ribosomes in vitro. Probably functions indirectly by altering the affinity of the ribosome for aminoacyl-tRNA, thus increasing their reactivity as acceptors for peptidyl transferase. The polypeptide is Elongation factor P (Salinibacter ruber (strain DSM 13855 / M31)).